Reading from the N-terminus, the 695-residue chain is Glycine--tRNA ligase beta subunit (695 aa).

It belongs to the class-II aminoacyl-tRNA synthetase family. As to quaternary structure, tetramer of two alpha and two beta subunits.

Its subcellular location is the cytoplasm. It catalyses the reaction tRNA(Gly) + glycine + ATP = glycyl-tRNA(Gly) + AMP + diphosphate. The protein is Glycine--tRNA ligase beta subunit of Desulforamulus reducens (strain ATCC BAA-1160 / DSM 100696 / MI-1) (Desulfotomaculum reducens).